The sequence spans 84 residues: UPF0473 protein CKL_1327 (84 aa).

It belongs to the UPF0473 family.

The polypeptide is UPF0473 protein CKL_1327 (Clostridium kluyveri (strain ATCC 8527 / DSM 555 / NBRC 12016 / NCIMB 10680 / K1)).